Reading from the N-terminus, the 274-residue chain is Copper chaperone for superoxide dismutase (274 aa).

Positions 11–74 constitute an HMA domain; sequence ACMLEFAVQM…LLEDTGRQAV (64 aa). 2 residues coordinate Cu cation: cysteine 22 and cysteine 25. Lysine 76 is covalently cross-linked (Glycyl lysine isopeptide (Lys-Gly) (interchain with G-Cter in ubiquitin)). The interval 88–234 is superoxide dismutase-like; sequence AAVAILGGSG…LACGIIARSA (147 aa). Cysteine 141 and cysteine 227 are disulfide-bonded. Zn(2+) contacts are provided by histidine 147, histidine 155, histidine 164, and aspartate 167. Residues lysine 189, lysine 216, and lysine 241 each participate in a glycyl lysine isopeptide (Lys-Gly) (interchain with G-Cter in ubiquitin) cross-link. Cu cation is bound by residues cysteine 244 and cysteine 246.

In the C-terminal section; belongs to the Cu-Zn superoxide dismutase family. Homodimer, and heterodimer with SOD1. Interacts with COMMD1. Interacts with XIAP/BIRC4. Interacts with SLC31A1(via C-terminal domain); this interaction is Cu(1+)-mediated. The heterodimer CCS:SOD1 interacts with SLC31A1; this heterotrimer is Cu(1+)-mediated and its maintenance is regulated through SOD1 activation. Cu(2+) serves as cofactor. It depends on Zn(2+) as a cofactor. Post-translationally, ubiquitinion by XIAP/BIRC4 leads to enhancement of its chaperone activity toward its physiologic target, SOD1, rather than proteasomal degradation. XIAP/BIRC4 preferentially ubiquitinates at Lys-241.

The protein localises to the cytoplasm. Functionally, delivers copper to copper zinc superoxide dismutase (SOD1). The sequence is that of Copper chaperone for superoxide dismutase from Sus scrofa (Pig).